The sequence spans 557 residues: Probable asparagine synthetase [glutamine-hydrolyzing] (557 aa).

Cys2 acts as the For GATase activity in catalysis. Residues 2–188 form the Glutamine amidotransferase type-2 domain; the sequence is CGILAVHHVA…PGHYYDSETK (187 aa). L-glutamine-binding positions include 50 to 54, 75 to 77, and Asp99; these read RLAIV and NGE. An Asparagine synthetase domain is found at 196 to 531; the sequence is PSWWDENKIP…PRQCADTVMR (336 aa). ATP is bound by residues Leu235, Ile280, and 354–355; that span reads SG. Residues Ser391 and Ser489 each carry the phosphoserine modification.

It is found in the cytoplasm. The protein localises to the nucleus. It carries out the reaction L-aspartate + L-glutamine + ATP + H2O = L-asparagine + L-glutamate + AMP + diphosphate + H(+). It participates in amino-acid biosynthesis; L-asparagine biosynthesis; L-asparagine from L-aspartate (L-Gln route): step 1/1. This is Probable asparagine synthetase [glutamine-hydrolyzing] (asn1) from Schizosaccharomyces pombe (strain 972 / ATCC 24843) (Fission yeast).